The sequence spans 348 residues: Holliday junction branch migration complex subunit RuvB (348 aa).

A disordered region spans residues 1-20; sequence MKPPARMVSPERRSDDVGDT. Positions 1 to 183 are large ATPase domain (RuvB-L); it reads MKPPARMVSP…FGIPIRLNFY (183 aa). ATP-binding positions include Leu-22, Arg-23, Gly-64, Lys-67, Thr-68, Thr-69, 130 to 132, Arg-173, Tyr-183, and Arg-220; that span reads EDF. Mg(2+) is bound at residue Thr-68. The tract at residues 184-254 is small ATPAse domain (RuvB-S); that stretch reads TVEELEGIVT…IADHALSALE (71 aa). The tract at residues 257-348 is head domain (RuvB-H); the sequence is AAGLDAMDRR…QIGLFGNDDD (92 aa). 3 residues coordinate DNA: Arg-293, Arg-312, and Arg-317.

This sequence belongs to the RuvB family. As to quaternary structure, homohexamer. Forms an RuvA(8)-RuvB(12)-Holliday junction (HJ) complex. HJ DNA is sandwiched between 2 RuvA tetramers; dsDNA enters through RuvA and exits via RuvB. An RuvB hexamer assembles on each DNA strand where it exits the tetramer. Each RuvB hexamer is contacted by two RuvA subunits (via domain III) on 2 adjacent RuvB subunits; this complex drives branch migration. In the full resolvosome a probable DNA-RuvA(4)-RuvB(12)-RuvC(2) complex forms which resolves the HJ.

It is found in the cytoplasm. The enzyme catalyses ATP + H2O = ADP + phosphate + H(+). Functionally, the RuvA-RuvB-RuvC complex processes Holliday junction (HJ) DNA during genetic recombination and DNA repair, while the RuvA-RuvB complex plays an important role in the rescue of blocked DNA replication forks via replication fork reversal (RFR). RuvA specifically binds to HJ cruciform DNA, conferring on it an open structure. The RuvB hexamer acts as an ATP-dependent pump, pulling dsDNA into and through the RuvAB complex. RuvB forms 2 homohexamers on either side of HJ DNA bound by 1 or 2 RuvA tetramers; 4 subunits per hexamer contact DNA at a time. Coordinated motions by a converter formed by DNA-disengaged RuvB subunits stimulates ATP hydrolysis and nucleotide exchange. Immobilization of the converter enables RuvB to convert the ATP-contained energy into a lever motion, pulling 2 nucleotides of DNA out of the RuvA tetramer per ATP hydrolyzed, thus driving DNA branch migration. The RuvB motors rotate together with the DNA substrate, which together with the progressing nucleotide cycle form the mechanistic basis for DNA recombination by continuous HJ branch migration. Branch migration allows RuvC to scan DNA until it finds its consensus sequence, where it cleaves and resolves cruciform DNA. The sequence is that of Holliday junction branch migration complex subunit RuvB from Bradyrhizobium sp. (strain ORS 278).